Here is a 137-residue protein sequence, read N- to C-terminus: Prostate and testis expressed protein 13 (137 aa).

The signal sequence occupies residues 1–20 (MFQKLLLSVFIILLMDVGER). A UPAR/Ly6 domain is found at 28 to 114 (RHCNLCSHYD…CIDRNYCNDG (87 aa)). 5 cysteine pairs are disulfide-bonded: C30–C60, C33–C41, C48–C84, C87–C104, and C105–C111. The N-linked (GlcNAc...) asparagine glycan is linked to N57.

Belongs to the PATE family. Strongly expressed in the epididymis, including the initial segment, caput, corpus and cauda regions. Weakly expressed in prostate.

Its subcellular location is the secreted. The polypeptide is Prostate and testis expressed protein 13 (Mus musculus (Mouse)).